The primary structure comprises 72 residues: Hypertrehalosaemic prohormone (72 aa).

The first 21 residues, 1-21 (MNHLVKVLIVVVAIALVLCEA), serve as a signal peptide directing secretion. Glutamine 22 is modified (pyrrolidone carboxylic acid). Threonine 31 bears the Threonine amide mark.

The protein belongs to the AKH/HRTH/RPCH family. As to expression, expressed in corpora cardiaca.

Its subcellular location is the secreted. Functionally, hypertrehalosaemic factors are neuropeptides that elevate the level of trehalose in the hemolymph (trehalose is the major carbohydrate in the hemolymph of insects). The chain is Hypertrehalosaemic prohormone from Blaberus discoidalis (Tropical cockroach).